A 282-amino-acid polypeptide reads, in one-letter code: Large ribosomal subunit protein uL2 (282 aa).

Disordered stretches follow at residues glutamate 31–glycine 56 and serine 226–methionine 282. The span at leucine 35–arginine 44 shows a compositional bias: polar residues. Positions threonine 257–lysine 266 are enriched in basic residues.

Belongs to the universal ribosomal protein uL2 family. In terms of assembly, part of the 50S ribosomal subunit. Forms a bridge to the 30S subunit in the 70S ribosome.

Its function is as follows. One of the primary rRNA binding proteins. Required for association of the 30S and 50S subunits to form the 70S ribosome, for tRNA binding and peptide bond formation. It has been suggested to have peptidyltransferase activity; this is somewhat controversial. Makes several contacts with the 16S rRNA in the 70S ribosome. The sequence is that of Large ribosomal subunit protein uL2 from Levilactobacillus brevis (strain ATCC 367 / BCRC 12310 / CIP 105137 / JCM 1170 / LMG 11437 / NCIMB 947 / NCTC 947) (Lactobacillus brevis).